We begin with the raw amino-acid sequence, 156 residues long: Small ribosomal subunit protein uS7 (156 aa).

It belongs to the universal ribosomal protein uS7 family. Part of the 30S ribosomal subunit. Contacts proteins S9 and S11.

Its function is as follows. One of the primary rRNA binding proteins, it binds directly to 16S rRNA where it nucleates assembly of the head domain of the 30S subunit. Is located at the subunit interface close to the decoding center, probably blocks exit of the E-site tRNA. The polypeptide is Small ribosomal subunit protein uS7 (Pseudarthrobacter chlorophenolicus (strain ATCC 700700 / DSM 12829 / CIP 107037 / JCM 12360 / KCTC 9906 / NCIMB 13794 / A6) (Arthrobacter chlorophenolicus)).